Consider the following 102-residue polypeptide: Glutaredoxin (102 aa).

Positions 3–102 (MTKTKELVSS…VPLLTEAGAV (100 aa)) constitute a Glutaredoxin domain. The cysteines at positions 23 and 26 are disulfide-linked.

It belongs to the glutaredoxin family. CPYC subfamily.

The protein localises to the cytoplasm. Functionally, has a glutathione-disulfide oxidoreductase activity in the presence of NADPH and glutathione reductase. Reduces low molecular weight disulfides and proteins. The polypeptide is Glutaredoxin (Ricinus communis (Castor bean)).